The sequence spans 728 residues: Catalase-peroxidase 1 (728 aa).

Positions 91–218 (WHSAGTYRTA…LAAVQMGLIY (128 aa)) form a cross-link, tryptophyl-tyrosyl-methioninium (Trp-Tyr) (with M-244). Residue His-92 is the Proton acceptor of the active site. Positions 218–244 (YVNPEGPDGNPDPVAAARDIRDTFARM) form a cross-link, tryptophyl-tyrosyl-methioninium (Tyr-Met) (with W-91). His-259 is a heme b binding site.

The protein belongs to the peroxidase family. Peroxidase/catalase subfamily. In terms of assembly, homodimer or homotetramer. It depends on heme b as a cofactor. Post-translationally, formation of the three residue Trp-Tyr-Met cross-link is important for the catalase, but not the peroxidase activity of the enzyme.

It carries out the reaction H2O2 + AH2 = A + 2 H2O. The enzyme catalyses 2 H2O2 = O2 + 2 H2O. In terms of biological role, bifunctional enzyme with both catalase and broad-spectrum peroxidase activity. This is Catalase-peroxidase 1 from Burkholderia ambifaria (strain MC40-6).